The following is a 75-amino-acid chain: UPF0154 protein MYPU_1460 (75 aa).

Residues 8–28 (GLIVGLSILFFIIGGVVAFFV) form a helical membrane-spanning segment.

Belongs to the UPF0154 family.

The protein localises to the membrane. This is UPF0154 protein MYPU_1460 from Mycoplasmopsis pulmonis (strain UAB CTIP) (Mycoplasma pulmonis).